A 183-amino-acid polypeptide reads, in one-letter code: Protein SHI RELATED SEQUENCE 6 (183 aa).

Positions 41, 44, 52, 57, 61, and 68 each coordinate Zn(2+). The zn(2)-C6 fungal-type; degenerate DNA-binding region spans 41 to 68 (CRDCGNRAKKECLFERCRTCCKSRGYNC). Residues 79–88 (SSATRSSSSP) are compositionally biased toward low complexity. A disordered region spans residues 79-121 (SSATRSSSSPSERKKKLKIDKQSSPNVSLLPTTTSRQERGFRE). The span at 100-113 (QSSPNVSLLPTTTS) shows a compositional bias: polar residues. Residues 157–160 (ISGH) carry the Required for homo- and heterodimerization motif.

The protein belongs to the SHI protein family.

The protein localises to the nucleus. Functionally, transcription activator that binds DNA on 5'-ACTCTAC-3' and promotes auxin homeostasis-regulating gene expression (e.g. YUC genes), as well as genes affecting stamen development, cell expansion and timing of flowering. Synergistically with other SHI-related proteins, regulates gynoecium, stamen and leaf development in a dose-dependent manner, controlling apical-basal patterning. Promotes style and stigma formation, and influences vascular development during gynoecium development. May also have a role in the formation and/or maintenance of the shoot apical meristem (SAM). This chain is Protein SHI RELATED SEQUENCE 6 (SRS6), found in Arabidopsis thaliana (Mouse-ear cress).